Consider the following 100-residue polypeptide: MVPLWWYIVLGVVLFVIGAAGVLIRRNILVVLMSLELLLNSVNINFIAFGHYYDDFRGQIFAIFVIAITAAEVAVALGILVALVRNKSTLKVDDVTMMKG.

3 consecutive transmembrane segments (helical) span residues 4–24 (LWWY…GVLI), 28–48 (ILVV…NFIA), and 60–80 (IFAI…LGIL).

It belongs to the complex I subunit 4L family. NDH-1 is composed of 14 different subunits. Subunits NuoA, H, J, K, L, M, N constitute the membrane sector of the complex.

Its subcellular location is the cell inner membrane. It carries out the reaction a quinone + NADH + 5 H(+)(in) = a quinol + NAD(+) + 4 H(+)(out). Functionally, NDH-1 shuttles electrons from NADH, via FMN and iron-sulfur (Fe-S) centers, to quinones in the respiratory chain. The immediate electron acceptor for the enzyme in this species is believed to be ubiquinone. Couples the redox reaction to proton translocation (for every two electrons transferred, four hydrogen ions are translocated across the cytoplasmic membrane), and thus conserves the redox energy in a proton gradient. This is NADH-quinone oxidoreductase subunit K 2 from Rhizobium etli (strain ATCC 51251 / DSM 11541 / JCM 21823 / NBRC 15573 / CFN 42).